We begin with the raw amino-acid sequence, 97 residues long: U-scoloptoxin(10)-Sa2a (97 aa).

A signal peptide spans 1-23 (MNKSMLIFFTILFLTYIIEEKEA).

The protein belongs to the scoloptoxin-10 family. Contains 3 disulfide bonds. Expressed by the venom gland.

Its subcellular location is the secreted. The chain is U-scoloptoxin(10)-Sa2a from Scolopendra alternans (Florida Keys giant centipede).